Here is a 304-residue protein sequence, read N- to C-terminus: MMEYPNQSGFRQRKLLPQVRMRGSAMEPSDPTQLFDDTSSGVNKHEPGRVGKSPDVFSGQNLLSDPMSNLAMAYGSSLASHGKEMMDKNLDRFIPISKLKYYFAVDTVYVGKKLGLLVFPYMHDNWEVNYQQDTPVAPRFDINAPDLYIPVMGFITYVLVAGLALGTQNRFSPEILGIQASSALVWLIIEVLAVLLSLYLVTVNTDLTTIDLVAFSGYKYVGMIVGVVAGLLFGRTGYYLALLWFCASIFVFTIRTLRLKILSEAAAEGRLVRGTKNQLRMYLTMAIAAAQPVFMYWLTFHLVR.

Residues 1-146 (MMEYPNQSGF…APRFDINAPD (146 aa)) are Cytoplasmic-facing. A disordered region spans residues 21–54 (MRGSAMEPSDPTQLFDDTSSGVNKHEPGRVGKSP). Over residues 30–42 (DPTQLFDDTSSGV) the composition is skewed to polar residues. Residues 147–167 (LYIPVMGFITYVLVAGLALGT) form a helical membrane-spanning segment. Topologically, residues 168–182 (QNRFSPEILGIQASS) are extracellular. Residues 183 to 203 (ALVWLIIEVLAVLLSLYLVTV) traverse the membrane as a helical segment. Topologically, residues 204-212 (NTDLTTIDL) are cytoplasmic. Residues 213–233 (VAFSGYKYVGMIVGVVAGLLF) form a helical membrane-spanning segment. Residues 234–236 (GRT) lie on the Extracellular side of the membrane. Residues 237–257 (GYYLALLWFCASIFVFTIRTL) form a helical membrane-spanning segment. At 258–282 (RLKILSEAAAEGRLVRGTKNQLRMY) the chain is on the cytoplasmic side. Residues 283–303 (LTMAIAAAQPVFMYWLTFHLV) form a helical membrane-spanning segment. A topological domain (extracellular) is located at residue arginine 304.

Belongs to the YIF1 family.

The protein resides in the endoplasmic reticulum membrane. The protein localises to the golgi apparatus membrane. It is found in the endoplasmic reticulum-Golgi intermediate compartment membrane. Functions in endoplasmic reticulum to Golgi vesicle-mediated transport and regulates the proper organization of the endoplasmic reticulum and the Golgi. Plays a key role in targeting to neuronal dendrites receptors such as HTR1A. Plays also a role in primary cilium and sperm flagellum assembly probably through protein transport to these compartments. The polypeptide is Protein YIF1B (yif1b) (Danio rerio (Zebrafish)).